The chain runs to 580 residues: DNA mismatch repair protein MutL (580 aa).

It belongs to the DNA mismatch repair MutL/HexB family.

Functionally, this protein is involved in the repair of mismatches in DNA. It is required for dam-dependent methyl-directed DNA mismatch repair. May act as a 'molecular matchmaker', a protein that promotes the formation of a stable complex between two or more DNA-binding proteins in an ATP-dependent manner without itself being part of a final effector complex. The sequence is that of DNA mismatch repair protein MutL from Chlamydia felis (strain Fe/C-56) (Chlamydophila felis).